Consider the following 359-residue polypeptide: MVQACEGRSRAQLPTLSLGADMTQPPPTKAPAKKHVRLQERRGSSVALMLDVQSLGTVEPICSVNTPREVTLHFLRTAGHPLTRWTLQHQPPSPKQLEEEFLKIPSNFVNPEDLDIPGHASKDRYKTILPNPQSRVCLGRAQSQEDSDYINANYIRGYDGKEKVYIATQGPMPNTVADFWEMVWQEDVSLIVMLTQLREGKEKCVHYWPTEEEAYGPFQIRIQDMKEHPEYTVRQLTIQHQQECRSVKHILFSAWPDHQTPESAGPLLRLVAEVETPETAANSGPIVVHCSAGIGRTGCFIATRIGCQQLKARGEVDILGIVCQLRLDRGGMIQTAEQYQFLHHTLALYAAQLPPEPNP.

Positions 1-33 (MVQACEGRSRAQLPTLSLGADMTQPPPTKAPAK) are disordered. Residues 38–51 (LQERRGSSVALMLD) form an interaction with MAP kinases region. Position 44 is a phosphoserine (S44). T66 bears the Phosphothreonine mark. 2 positions are modified to phosphoserine: S93 and S143. The region spanning 97–349 (LEEEFLKIPS…QFLHHTLALY (253 aa)) is the Tyrosine-protein phosphatase domain. Substrate-binding positions include D257, 290 to 296 (CSAGIGR), and Q334. Residue C290 is the Phosphocysteine intermediate of the active site. C290 is modified (cysteine sulfenic acid (-SOH)).

This sequence belongs to the protein-tyrosine phosphatase family. Non-receptor class subfamily. Oxidized at active site cysteine. Treatment with pervanadate (vanadate and H(2)O(2)) or with antigen enhanced oxidation of active site cysteine. As to expression, expressed in bone marrow-derived mast cells.

It is found in the cytoplasm. It localises to the cytoskeleton. It catalyses the reaction O-phospho-L-tyrosyl-[protein] + H2O = L-tyrosyl-[protein] + phosphate. Its activity is regulated as follows. Inhibited upon FCER1A triggering. In terms of biological role, may play a role in the regulation of T and B-lymphocyte development and signal transduction. The chain is Tyrosine-protein phosphatase non-receptor type 7 (Ptpn7) from Mus musculus (Mouse).